The primary structure comprises 656 residues: Tetratricopeptide repeat protein 30 homolog (656 aa).

TPR repeat units lie at residues 9 to 42 (EGEF…NPKN), 43 to 76 (LAAL…FPQY), 141 to 174 (AAVI…SGYQ), 176 to 208 (GLAY…GVKD), 238 to 271 (IEAF…NEHD), 378 to 412 (RKTA…DDSL), 416 to 449 (LPVL…CKEH), 451 to 484 (TWKL…KYDD), and 537 to 570 (SIIS…PEKK).

This sequence belongs to the TTC30/dfy-1/fleer family. As to quaternary structure, component of the IFT complex B composed of at least che-2, che-13, dyf-1, dyf-3, dyf-6, dyf-11, dyf-13, ift-20, ift-74, ift-81, ifta-2, osm-1, osm-5 and osm-6. Expressed in most amphid, both phasmid and several labial-quadrant neurons.

It localises to the cell projection. It is found in the cilium. Plays a role in anterograde intraflagellar transport (IFT), the process by which cilia precursors are transported from the base of the cilium to the site of their incorporation at the tip. Specifically required for the kinesin osm-3 to dock onto and move the IFT particles which contain these precursors. Component of the intraflagellar transport (IFT) complex B required for transport of proteins in the motile cilium. May be required for ciliary entrance and transport of specific ciliary cargo proteins such as che-3 which are related to motility. Required for polyglutamylation of axonemal tubulin in sensory cilia. The polypeptide is Tetratricopeptide repeat protein 30 homolog (Caenorhabditis elegans).